A 462-amino-acid polypeptide reads, in one-letter code: ATP synthase subunit beta 2 (462 aa).

151–158 contacts ATP; it reads GGAGVGKT.

This sequence belongs to the ATPase alpha/beta chains family. F-type ATPases have 2 components, CF(1) - the catalytic core - and CF(0) - the membrane proton channel. CF(1) has five subunits: alpha(3), beta(3), gamma(1), delta(1), epsilon(1). CF(0) has three main subunits: a(1), b(2) and c(9-12). The alpha and beta chains form an alternating ring which encloses part of the gamma chain. CF(1) is attached to CF(0) by a central stalk formed by the gamma and epsilon chains, while a peripheral stalk is formed by the delta and b chains.

It is found in the cell inner membrane. The catalysed reaction is ATP + H2O + 4 H(+)(in) = ADP + phosphate + 5 H(+)(out). In terms of biological role, produces ATP from ADP in the presence of a proton gradient across the membrane. The catalytic sites are hosted primarily by the beta subunits. This Chlorobaculum tepidum (strain ATCC 49652 / DSM 12025 / NBRC 103806 / TLS) (Chlorobium tepidum) protein is ATP synthase subunit beta 2.